We begin with the raw amino-acid sequence, 433 residues long: DNA methyltransferase 1-associated protein 1 (433 aa).

The segment at 1 to 204 (MSADVRDILD…EVVALLAKAK (204 aa)) is required for nuclear localization. The Myb-like domain occupies 148–197 (NNWSKVQTDHLFDLARRFDLRFIVMADRWNRQQHGTKTVEELKERYYEVV). Positions 186 to 281 (VEELKERYYE…ADQQNEHASN (96 aa)) form a coiled coil. Basic and acidic residues predominate over residues 252–264 (EARKKERERKTQD). Residues 252–305 (EARKKERERKTQDLQKLISQADQQNEHASNTPSTRKYEKKLHKKKVHQQPRPSR) form a disordered region. Polar residues predominate over residues 268-285 (LISQADQQNEHASNTPST). The span at 288–299 (YEKKLHKKKVHQ) shows a compositional bias: basic residues.

Interacts with Rel. Interacts with akirin and Bap55.

The protein localises to the nucleus. Its subcellular location is the cytoplasm. Its function is as follows. Involved in transcription repression and activation. Required for larvae and pupal development, and for normal innate immune responses. Involved in modulating the activation of the immune deficiency pathway (Imd), acting either downstream of, or at the level of, the NF-kappa-B factor Rel. Possibly functions with akirin to regulate Rel, and its interaction with the Brahma complex protein Bap55 suggests that it may regulate the IMD pathway at the level of chromatin remodeling. In Drosophila melanogaster (Fruit fly), this protein is DNA methyltransferase 1-associated protein 1.